The chain runs to 575 residues: Transcription factor coe2 (575 aa).

The tract at residues 63-66 (RKSN) is interaction with DNA. The segment at 151 to 170 (CRVLLTHEVMCSRCCEKKSC) adopts a C5-type zinc-finger fold. Interaction with DNA regions lie at residues 197 to 204 (NCLKTAGN) and 236 to 239 (NNSK). The 83-residue stretch at 254 to 336 (PCIKAISPSE…CKGAPGRFIY (83 aa)) folds into the IPT/TIG domain. Positions 450-487 (IRNTSSISPRGYSSSSTPQQSNYSTPSNSMNGYSNVPM) are disordered. The segment covering 454–476 (SSISPRGYSSSSTPQQSNYSTPS) has biased composition (low complexity). The span at 477–487 (NSMNGYSNVPM) shows a compositional bias: polar residues.

It belongs to the COE family.

It is found in the nucleus. Functionally, may play a pivotal role in the transcriptional cascade that specifies primary neurons in embryos. Stabilizes the higher neural potential of selected progenitor cells that express neurog2/X-ngnr-1 by maintaining Delta-Notch signaling. Thus ensures the transition between neural competence and irreversible commitment to a neural fate. Also promotes neuronal differentiation by activating neurod1 expression, directly or indirectly. The protein is Transcription factor coe2 of Xenopus tropicalis (Western clawed frog).